Here is a 96-residue protein sequence, read N- to C-terminus: uncharacterized protein (96 aa).

The protein localises to the mitochondrion. This is an uncharacterized protein from Saccharomyces cerevisiae (strain ATCC 204508 / S288c) (Baker's yeast).